A 126-amino-acid chain; its full sequence is Glycine cleavage system H protein (126 aa).

The region spanning 23 to 105 (AATVGITDHA…YGEGWLLRVR (83 aa)) is the Lipoyl-binding domain. N6-lipoyllysine is present on lysine 64.

This sequence belongs to the GcvH family. As to quaternary structure, the glycine cleavage system is composed of four proteins: P, T, L and H. (R)-lipoate is required as a cofactor.

Functionally, the glycine cleavage system catalyzes the degradation of glycine. The H protein shuttles the methylamine group of glycine from the P protein to the T protein. This chain is Glycine cleavage system H protein, found in Rubrobacter xylanophilus (strain DSM 9941 / JCM 11954 / NBRC 16129 / PRD-1).